The sequence spans 119 residues: uncharacterized protein (119 aa).

Residues 67–119 (LGLKEVQKKSNEGLNEVQGVADINKQKRPANSQDSSSVEGDIQNFLEKVTGKN) form a disordered region. The segment covering 95 to 104 (PANSQDSSSV) has biased composition (polar residues).

This is an uncharacterized protein from Anabaena variabilis.